The following is a 415-amino-acid chain: Protein maelstrom homolog (415 aa).

The segment at residues 4–73 (KKAARNAYFF…DPDSTSTYND (70 aa)) is a DNA-binding region (HMG box). Positions 367–399 (SSDPKYSTDKSERSSFEPRGVKPYQGPSGGGRG) are disordered. Basic and acidic residues predominate over residues 372–386 (YSTDKSERSSFEPRG).

This sequence belongs to the maelstrom family.

The protein localises to the cytoplasm. The protein resides in the nucleus. Its function is as follows. Plays a central role during spermatogenesis by repressing transposable elements and preventing their mobilization, which is essential for the germline integrity. Acts via the piRNA metabolic process, which mediates the repression of transposable elements during meiosis by forming complexes composed of piRNAs and Piwi proteins and governs the methylation and subsequent repression of transposons. Its association with piP-bodies suggests a participation in the secondary piRNAs metabolic process. Required for the localization of germ-cell factors to the meiotic nuage. This chain is Protein maelstrom homolog (mael), found in Xenopus tropicalis (Western clawed frog).